A 465-amino-acid polypeptide reads, in one-letter code: Cytochrome c peroxidase Ccp (465 aa).

At 1–6 the chain is on the cytoplasmic side; it reads MKMVSR. The chain crosses the membrane as a helical span at residues 7–27; sequence ITAIGLAGVAICYLGLSGYVW. Topologically, residues 28–465 are periplasmic; it reads YHDNKRSKQA…VYTPYMQDKQ (438 aa). Cytochrome c domains are found at residues 42–155, 185–287, and 337–454; these read SAVS…AKQR, QKVA…EKDP, and AQQK…HSLN. Heme c-binding residues include C59, C62, H63, M125, C207, C210, H211, C351, C354, H355, and M429.

In terms of assembly, the recombinant enzyme lacking its transmembrane domain is a monomer in solution. Heme c serves as cofactor.

It localises to the cell inner membrane. Its activity is regulated as follows. Does not require reductive activation for maximum activity, as peroxidatic heme is high-spin His/OH(-) 6-coordinated. Calcium ions are needed to attain maximum peroxidase activity. In terms of biological role, cytochrome peroxidase that enables anaerobic respiration with H(2)O(2) as a terminal electron acceptor. It receives electrons from the quinol pool. Menaquinol is probably the electron donor in vivo. It can use menadiol (a menaquinol analog), hydroquinone, duroquinol and the artificial electron donor ABTS(2-) in vitro, but only menadiol and hydroquinone can efficiently transfer electrons to Ccp, maintaining the catalytic activity of the enzyme. It enables E.coli to grow on a nonfermentable carbon source when H(2)O(2) is supplied. Plays a role in the peroxide stress response under anaerobic conditions. However, it does not degrade H(2)O(2) quickly enough to lower the periplasmic H(2)O(2) level below that of the surrounding medium and protect the cell from its toxic effects. In Escherichia coli (strain K12), this protein is Cytochrome c peroxidase Ccp.